The primary structure comprises 199 residues: Proteasome subunit beta type-2-B (199 aa).

M1 is subject to N-acetylmethionine.

The protein belongs to the peptidase T1B family. As to quaternary structure, component of the 20S core complex of the 26S proteasome. The 26S proteasome is composed of a core protease (CP), known as the 20S proteasome, capped at one or both ends by the 19S regulatory particle (RP/PA700). The 20S proteasome core is composed of 28 subunits that are arranged in four stacked rings, resulting in a barrel-shaped structure. The two end rings are each formed by seven alpha subunits, and the two central rings are each formed by seven beta subunits. The catalytic chamber with the active sites is on the inside of the barrel. As to expression, ubiquitous low levels, higher expression in siliques and flowers.

Its subcellular location is the cytoplasm. The protein localises to the nucleus. Functionally, non-catalytic component of the proteasome, a multicatalytic proteinase complex which is characterized by its ability to cleave peptides with Arg, Phe, Tyr, Leu, and Glu adjacent to the leaving group at neutral or slightly basic pH. The proteasome has an ATP-dependent proteolytic activity. In Arabidopsis thaliana (Mouse-ear cress), this protein is Proteasome subunit beta type-2-B (PBD2).